Consider the following 261-residue polypeptide: Cell division protein B (261 aa).

A winged-helix-like fold region spans residues 213–261 (SEDMILNYIKTTGGFIDVDYIAKNFDVSKDEVFNVLRRLEEKGLIVLEG).

In terms of assembly, interacts with CdvA. Interacts with CdvC.

It is found in the cytoplasm. Its subcellular location is the nucleoid. Part of a cell division machinery. The CdvA, CdvB and CdvC proteins polymerize between segregating nucleoids and persist throughout cell division, forming a successively smaller structure during constriction. The sequence is that of Cell division protein B from Sulfolobus acidocaldarius (strain ATCC 33909 / DSM 639 / JCM 8929 / NBRC 15157 / NCIMB 11770).